Consider the following 251-residue polypeptide: MQTVNKQAIAQAFGRAAQSYNQHAGLQRLCGEELASYATRRQGQKVLDAGCGPGWFSQHWRAAGNHVTALDLSAEMLVQAQALHTADCYQPGDIEALPFSDASFDLCWSNLAVQWCSDLSLALTELYRVTSPGGQVLFSTLSADSLHELSAAWQPLDLPAPVNRFLPFDAIAHAGQHLPLTLMQQTLTVGFPDVLSALRSLKGIGATHLHQGRHGGLLSRRHLQQLEQHWPRDRRGYLLSYHLVYGVMHRE.

It belongs to the methyltransferase superfamily.

The enzyme catalyses malonyl-[ACP] + S-adenosyl-L-methionine = malonyl-[ACP] methyl ester + S-adenosyl-L-homocysteine. The protein operates within cofactor biosynthesis; biotin biosynthesis. Functionally, converts the free carboxyl group of a malonyl-thioester to its methyl ester by transfer of a methyl group from S-adenosyl-L-methionine (SAM). It allows to synthesize pimeloyl-ACP via the fatty acid synthetic pathway. This Erwinia billingiae (strain Eb661) protein is Malonyl-[acyl-carrier protein] O-methyltransferase.